The sequence spans 190 residues: MVRVSTSEFRVGLRIEIDGQPYLILQNDFVKPGKGQAFNRIKVKNFLTGRVIERTYKSGESVETADIVERSMRLLYTDQEGATFMDDETFEQEVVFWEKLENIRQWLLEDTIYTLVLYNGDVVAVEPPIFMELSIAETAPGVRGDTASGRVLKPAVTNTGAKIMVPIFIDEGELVKVDTRTGSYESRVSK.

The protein belongs to the elongation factor P family.

Its subcellular location is the cytoplasm. It participates in protein biosynthesis; polypeptide chain elongation. Functionally, involved in peptide bond synthesis. Stimulates efficient translation and peptide-bond synthesis on native or reconstituted 70S ribosomes in vitro. Probably functions indirectly by altering the affinity of the ribosome for aminoacyl-tRNA, thus increasing their reactivity as acceptors for peptidyl transferase. The sequence is that of Elongation factor P 2 (efp2) from Chlamydia pneumoniae (Chlamydophila pneumoniae).